A 729-amino-acid chain; its full sequence is Circadian input-output histidine kinase CikA (729 aa).

Residues 1-169 (MPQPIFDRIL…QVTTQIRQSL (169 aa)) are N-terminal domain. Residues 170–314 (ELPELLKIAV…VEFLTHLSQH (145 aa)) form a GAF domain region. Positions 366–587 (TMSHELRTPL…TFTVGLPAIS (222 aa)) constitute a Histidine kinase domain. Residue His369 is modified to Phosphohistidine; by autocatalysis. The psR domain, binds KaiB stretch occupies residues 613–729 (EGRIVLVSED…GLTSLATSAQ (117 aa)).

The protein in the N-terminal section; belongs to the phytochrome family. As to quaternary structure, homodimer. Part of the circadian clock (KaiA, KaiB, KaiC, CikA, RpaA, SasA), the composition of which varies during the circadian cycle. KaiA and CikA compete for binding to KaiB(fs). The PsR domain binds the KaiB:KaiC CI complex but poorly to either protein alone. KaiA and CikA bind to the same region of the KaiB(fs) form and therefore compete.

The catalysed reaction is ATP + protein L-histidine = ADP + protein N-phospho-L-histidine.. Functions in an input pathway to the Kai circadian clock. Senses oxidized quinones via its C-terminal pseudo-receiver domain, providing a link between cell metabolism and the clock. Affects the ratio of phosphorylated to unphosphorylated KaiC, binds quinones via its pseudo-receptor domain. Quinone-binding destabilizes the protein rapidly. Autophosphorylates, does not transfer the phosphate to its pseudo-receiver (PsR) domain. May play a role in cell division. Functionally, also functions in a two-component CikA/RpaA output pathway from the circadian clock, negatively regulating kaiBC expression independently of labA and of sasA. One of three clock output pathways. Dephosphorylates phospho-RpaA, enhanced by KaiB and KaiC, has only modest kinase activity on RpaA. In Thermosynechococcus vestitus (strain NIES-2133 / IAM M-273 / BP-1), this protein is Circadian input-output histidine kinase CikA.